The sequence spans 253 residues: MSTTTTTTNQPITAESMLRLFPDIDTSSAPLSGHDEEQIRLMDEVCIVLDEDDKPIGTASKKICHLMTNIDKGLLHRAFSVFLFNDKNELLLQQRATEKITFPDMWTNTCCSHPLHIPTETGSTLEDSIAGVKRAAQRKLEHELGIKKEQVPFEDFHFLTRIHYKAPSDGMWGEHEIDYILFIKANVDLDINKNEVRDTQYVTPESLKQQFDDPSLVFTPWFKLICNSMLFEWWQNLDSGLDKYLNEQEIRRM.

Position 61 (K61) interacts with substrate. Residues H65 and H76 each contribute to the Mg(2+) site. Positions 74-224 (LLHRAFSVFL…SLVFTPWFKL (151 aa)) constitute a Nudix hydrolase domain. Q94 and K99 together coordinate substrate. C111 is an active-site residue. S112 contributes to the substrate binding site. The Nudix box signature appears at 112-145 (SHPLHIPTETGSTLEDSIAGVKRAAQRKLEHELG). The Mg(2+) site is built by E174 and E176. E176 is an active-site residue.

The protein belongs to the IPP isomerase type 1 family. Requires Mg(2+) as cofactor.

The enzyme catalyses isopentenyl diphosphate = dimethylallyl diphosphate. It functions in the pathway isoprenoid biosynthesis; dimethylallyl diphosphate biosynthesis; dimethylallyl diphosphate from isopentenyl diphosphate: step 1/1. In terms of biological role, isopentenyl-diphosphate delta-isomerase; part of the second module of ergosterol biosynthesis pathway that includes the middle steps of the pathway. IDI1 catalyzes the 1,3-allylic rearrangement of isopentenyl (IPP) to its highly electrophilic allylic isomer, dimethylallyl diphosphate (DMAPP). The second module is carried out in the vacuole and involves the formation of farnesyl diphosphate, which is also an important intermediate in the biosynthesis of ubiquinone, dolichol, heme and prenylated proteins. Activity by the mevalonate kinase ERG12 (FG05912) first converts mevalonate into 5-phosphomevalonate. 5-phosphomevalonate is then further converted to 5-diphosphomevalonate by the phosphomevalonate kinase ERG8 (FG09764). The diphosphomevalonate decarboxylase ERG19 (FG10424) then produces isopentenyl diphosphate. The isopentenyl-diphosphate delta-isomerase IDI1 (FG09722) then catalyzes the 1,3-allylic rearrangement of the homoallylic substrate isopentenyl (IPP) to its highly electrophilic allylic isomer, dimethylallyl diphosphate (DMAPP). Finally the farnesyl diphosphate synthase ERG20 (FG06784) catalyzes the sequential condensation of isopentenyl pyrophosphate with dimethylallyl pyrophosphate, and then with the resultant geranylpyrophosphate to the ultimate product farnesyl pyrophosphate. This chain is Isopentenyl-diphosphate delta-isomerase IDI1, found in Gibberella zeae (strain ATCC MYA-4620 / CBS 123657 / FGSC 9075 / NRRL 31084 / PH-1) (Wheat head blight fungus).